The sequence spans 421 residues: Anthranilate synthase component 1 (421 aa).

Residues Ser-31 and 207-209 (PYM) each bind L-tryptophan. 242 to 243 (GT) is a binding site for chorismate. Glu-269 contributes to the Mg(2+) binding site. Residues Tyr-357, Arg-377, 391-393 (GAG), and Gly-393 contribute to the chorismate site. Glu-406 is a binding site for Mg(2+).

The protein belongs to the anthranilate synthase component I family. Heterotetramer consisting of two non-identical subunits: a beta subunit (TrpG) and a large alpha subunit (TrpE). It depends on Mg(2+) as a cofactor.

It carries out the reaction chorismate + L-glutamine = anthranilate + pyruvate + L-glutamate + H(+). Its pathway is amino-acid biosynthesis; L-tryptophan biosynthesis; L-tryptophan from chorismate: step 1/5. With respect to regulation, cooperatively feedback inhibited by tryptophan. Functionally, part of a heterotetrameric complex that catalyzes the two-step biosynthesis of anthranilate, an intermediate in the biosynthesis of L-tryptophan. In the first step, the glutamine-binding beta subunit (TrpG) of anthranilate synthase (AS) provides the glutamine amidotransferase activity which generates ammonia as a substrate that, along with chorismate, is used in the second step, catalyzed by the large alpha subunit of AS (TrpE) to produce anthranilate. In the absence of TrpG, TrpE can synthesize anthranilate directly from chorismate and high concentrations of ammonia. The polypeptide is Anthranilate synthase component 1 (trpE) (Saccharolobus solfataricus (strain ATCC 35092 / DSM 1617 / JCM 11322 / P2) (Sulfolobus solfataricus)).